A 192-amino-acid polypeptide reads, in one-letter code: Ion-translocating oxidoreductase complex subunit B (192 aa).

The hydrophobic stretch occupies residues 1–26 (MNAIWIAVAAVSLLGLAFGAILGYAS). The 4Fe-4S domain maps to 32–91 (EDDPVVEKIDEILPQSQCGQCGYPGCRPYAEAISCNGEKINRCAPGGEAVMLKIAELLNV). Positions 49, 52, 57, 74, 117, 120, 123, 127, 147, 150, 153, and 157 each coordinate [4Fe-4S] cluster. 4Fe-4S ferredoxin-type domains lie at 108-137 (MVAV…GATR) and 138-167 (AMHT…LQPV).

The protein belongs to the 4Fe4S bacterial-type ferredoxin family. RnfB subfamily. The complex is composed of six subunits: RsxA, RsxB, RsxC, RsxD, RsxE and RsxG. [4Fe-4S] cluster is required as a cofactor.

It is found in the cell inner membrane. Its function is as follows. Part of a membrane-bound complex that couples electron transfer with translocation of ions across the membrane. Required to maintain the reduced state of SoxR. This is Ion-translocating oxidoreductase complex subunit B from Shigella dysenteriae serotype 1 (strain Sd197).